Reading from the N-terminus, the 822-residue chain is MLQCLTSESEEGAEEREESSTEDLEELKEFVTLAFVRENTQKRLQNAQQHGKKKRKKKRLVINLSNCRYDSVRRAAQQYGLREAGDNDDWTLYWTDYSVSLERVMEMKSYQKINHFPGMSEICRKDLLARNMSRMLKLFPKDFHFFPRTWCLPADWGDLQTYSRTRKNKTYICKPDSGCQGRGIFITRSVKEIKPGEDMICQLYISKPFIIDGFKFDLRVYVLVTSCDPLRVFVYNEGLARFATTSYSHPNLDNLDEICMHLTNYSINKHSSNFVQDAFSGSKRKLSTFNSYMKTHGYDVEQIWRGIEDVIIKTLISAHPVIKHNYHTCFPSHTLNSACFEILGFDILLDRKLKPWLLEVNHSPSFSTDSKLDKEVKDSLLYDALVLINLGNCDKKKVLEEERQRGRFLQQCPNREIRLEEVKGFQAMRLQKTEEYEKKNCGGFRLIYPGLNLEKYDKFFQDNSSLFQNTVASRARELYARQLIQELRQKQEKKVFLKKARKEETQGESAGEQARDKVVRLQRQRQQPKCKTVATCPPKQSLHPVTLVSCTSGLLLNIRGLKKGEISESLEQKDTKEAMLIPCKPVSARNYSSVPDLRSANPSCFEPEFHVPNAKVKEVKSAFMVNIESTAQPITSVESSRDATAPISTSLESLASMSLSTSPECSSPESVHMVSYNHKQQKASFHKPMQEKKSKPLMFSKSRHLDLNCTSMKNDINRQYLMSEILQKVQMKKKRPLFPAPKSQYPTLSKERCPHSRSSSRKKEMNSPSVFVLQASHSRAESLNDLLVVATQARLDPRPSRSHSGTTTRDSSTQDPKHTATA.

A disordered region spans residues 1–24; sequence MLQCLTSESEEGAEEREESSTEDL. The span at 8-24 shows a compositional bias: acidic residues; that stretch reads ESEEGAEEREESSTEDL. A TTL domain is found at 57–400; it reads KKRLVINLSN…GNCDKKKVLE (344 aa). Residues Lys-174, 180-181, 202-205, and 215-217 each bind ATP; these read QG, QLYI, and KFD. Gln-180 is a binding site for a protein. Arg-241 contacts L-glutamate. 263-264 contacts ATP; it reads TN. Tyr-265, Ser-266, and Lys-283 together coordinate L-glutamate. Mg(2+) contacts are provided by Asp-346, Glu-359, and Asn-361. His-362 contributes to the a protein binding site. The segment at 371-450 is c-MTBD region; the sequence is KLDKEVKDSL…CGGFRLIYPG (80 aa). Lys-377 is a binding site for L-glutamate. Disordered regions lie at residues 736 to 772 and 791 to 822; these read PLFP…SVFV and TQAR…TATA. A compositionally biased stretch (polar residues) spans 802–814; the sequence is SHSGTTTRDSSTQ.

Belongs to the tubulin--tyrosine ligase family. In terms of assembly, found in a complex with CEP41. Mg(2+) is required as a cofactor. As to expression, highly expressed in testis. Expressed in brain, heart, kidney, liver, lung, muscle and trachea. In the brain, specifically expressed in ependymal cilia.

It localises to the cytoplasm. Its subcellular location is the cytoskeleton. The protein localises to the cilium axoneme. The protein resides in the cilium basal body. It carries out the reaction L-glutamyl-[protein] + L-glutamate + ATP = gamma-L-glutamyl-L-glutamyl-[protein] + ADP + phosphate + H(+). It catalyses the reaction (L-glutamyl)(n)-gamma-L-glutamyl-L-glutamyl-[protein] + L-glutamate + ATP = (L-glutamyl)(n+1)-gamma-L-glutamyl-L-glutamyl-[protein] + ADP + phosphate + H(+). Its function is as follows. Polyglutamylase which modifies both tubulin and non-tubulin proteins, generating alpha-linked polyglutamate side chains on the gamma-carboxyl group of specific glutamate residues of target proteins. Preferentially mediates ATP-dependent long polyglutamate chain elongation over the initiation step of the polyglutamylation reaction. Preferentially modifies the alpha-tubulin tail over a beta-tail. Promotes tubulin polyglutamylation which stimulates spastin/SPAST-mediated microtubule severing, thereby regulating microtubule functions. Mediates microtubule polyglutamylation in primary cilia axoneme which is important for ciliary structural formation and motility. Mediates microtubule polyglutamylation in motile cilia, necessary for the regulation of ciliary coordinated beating. Polyglutamylates non-tubulin protein nucleotidyltransferase CGAS, leading to CGAS DNA-binding inhibition, thereby preventing antiviral defense response. In Mus musculus (Mouse), this protein is Tubulin polyglutamylase TTLL6.